The following is a 250-amino-acid chain: UPF0246 protein cce_3295 (250 aa).

It belongs to the UPF0246 family.

In Crocosphaera subtropica (strain ATCC 51142 / BH68) (Cyanothece sp. (strain ATCC 51142)), this protein is UPF0246 protein cce_3295.